A 331-amino-acid polypeptide reads, in one-letter code: Fe-S cluster assembly protein DRE2 (331 aa).

Residues 1-146 (MSEILLLLHP…MPTFKKPVSS (146 aa)) are N-terminal SAM-like domain. The segment at 142–164 (KPVSSPVTLTDTSANNTDAEDDL) is disordered. Positions 146–158 (SPVTLTDTSANNT) are enriched in polar residues. Positions 147–202 (PVTLTDTSANNTDAEDDLSMKRKLDSTKLAYFSDDSSGEEDDLIDENELIADSHKF) are linker. The [2Fe-2S] cluster site is built by Cys-212, Cys-224, Cys-227, and Cys-229. The fe-S binding site A stretch occupies residues 212-229 (CELPNGKKRKKACKDCTC). 4 residues coordinate [4Fe-4S] cluster: Cys-294, Cys-297, Cys-305, and Cys-308. 2 short sequence motifs (cx2C motif) span residues 294-297 (CSSC) and 305-308 (CDGC). The fe-S binding site B stretch occupies residues 294-308 (CSSCALGDAFRCDGC).

This sequence belongs to the anamorsin family. As to quaternary structure, monomer. Interacts with TAH18. Interacts with MIA40. [2Fe-2S] cluster is required as a cofactor. The cofactor is [4Fe-4S] cluster.

The protein localises to the cytoplasm. Its subcellular location is the mitochondrion intermembrane space. Component of the cytosolic iron-sulfur (Fe-S) protein assembly (CIA) machinery required for the maturation of extramitochondrial Fe-S proteins. Part of an electron transfer chain functioning in an early step of cytosolic Fe-S biogenesis, facilitating the de novo assembly of a [4Fe-4S] cluster on the scaffold complex CFD1-NBP35. Electrons are transferred to DRE2 from NADPH via the FAD- and FMN-containing protein TAH18. TAH18-DRE2 are also required for the assembly of the diferric tyrosyl radical cofactor of ribonucleotide reductase (RNR), probably by providing electrons for reduction during radical cofactor maturation in the catalytic small subunit RNR2. The chain is Fe-S cluster assembly protein DRE2 from Clavispora lusitaniae (strain ATCC 42720) (Yeast).